Reading from the N-terminus, the 295-residue chain is UDP-N-acetylenolpyruvoylglucosamine reductase (295 aa).

One can recognise an FAD-binding PCMH-type domain in the interval 23–188 (KVGGPADFLA…ISAKFALKPG (166 aa)). Arg167 is an active-site residue. The Proton donor role is filled by Ser217. Glu287 is an active-site residue.

It belongs to the MurB family. The cofactor is FAD.

It is found in the cytoplasm. It catalyses the reaction UDP-N-acetyl-alpha-D-muramate + NADP(+) = UDP-N-acetyl-3-O-(1-carboxyvinyl)-alpha-D-glucosamine + NADPH + H(+). The protein operates within cell wall biogenesis; peptidoglycan biosynthesis. Its function is as follows. Cell wall formation. This Streptococcus pyogenes serotype M3 (strain ATCC BAA-595 / MGAS315) protein is UDP-N-acetylenolpyruvoylglucosamine reductase.